The following is a 607-amino-acid chain: Pescadillo homolog (607 aa).

Residues 320 to 413 form the BRCT domain; that stretch reads KLKNLFKGLK…KLLPVNKYLI (94 aa). A disordered region spans residues 486 to 607; that stretch reads EALNSGALEE…KTQRKEILAK (122 aa). A compositionally biased stretch (acidic residues) spans 495–511; it reads EAPEEEDDDEEAPEEDE. Basic and acidic residues predominate over residues 530-549; the sequence is IFKENPSEQKKLTKQEEALR. Residues 551–562 are compositionally biased toward basic residues; the sequence is RMVKSRHKKLYR. The span at 563-607 shows a compositional bias: basic and acidic residues; sequence KMLEKQKKQTKEANLLKEKRQQIDKKQRVEQTQKRKTQRKEILAK.

The protein belongs to the pescadillo family.

The protein resides in the nucleus. It is found in the nucleolus. It localises to the nucleoplasm. Required for maturation of ribosomal RNAs and formation of the large ribosomal subunit. This chain is Pescadillo homolog, found in Culex quinquefasciatus (Southern house mosquito).